The following is a 414-amino-acid chain: tRNA methyltransferase 10 homolog C (414 aa).

The transit peptide at 1 to 35 (MNVTVRFLRPFARCLVPYTFHRKRSHLYSGVLQRY) directs the protein to the mitochondrion. Serine 79 is modified (phosphoserine). Residues 133–171 (GKEKAKKAKQVKKEMKAEAREEAKRARLLETTAEEQQQD) adopt a coiled-coil conformation. One can recognise an SAM-dependent MTase TRM10-type domain in the interval 186 to 378 (LGWKGVQAMQ…KFVPRRKHTG (193 aa)).

This sequence belongs to the class IV-like SAM-binding methyltransferase superfamily. TRM10 family. In terms of assembly, component of mitochondrial ribonuclease P, a complex composed of TRMT10C/MRPP1, HSD17B10/MRPP2 and PRORP/MRPP3. Interacts with HSD17B10/MRPP2; forming the MRPP1-MRPP2 subcomplex of the mitochondrial ribonuclease P complex. Interacts with GRSF1.

The protein resides in the mitochondrion matrix. The protein localises to the mitochondrion nucleoid. It carries out the reaction adenosine(9) in tRNA + S-adenosyl-L-methionine = N(1)-methyladenosine(9) in tRNA + S-adenosyl-L-homocysteine + H(+). The enzyme catalyses guanosine(9) in tRNA + S-adenosyl-L-methionine = N(1)-methylguanosine(9) in tRNA + S-adenosyl-L-homocysteine + H(+). It catalyses the reaction an adenosine in mRNA + S-adenosyl-L-methionine = an N(1)-methyladenosine in mRNA + S-adenosyl-L-homocysteine + H(+). Functionally, mitochondrial tRNA N(1)-methyltransferase involved in mitochondrial tRNA maturation. Component of mitochondrial ribonuclease P, a complex composed of TRMT10C/MRPP1, HSD17B10/MRPP2 and PRORP/MRPP3, which cleaves tRNA molecules in their 5'-ends. Together with HSD17B10/MRPP2, forms a subcomplex of the mitochondrial ribonuclease P, named MRPP1-MRPP2 subcomplex, which displays functions that are independent of the ribonuclease P activity. The MRPP1-MRPP2 subcomplex catalyzes the formation of N(1)-methylguanine and N(1)-methyladenine at position 9 (m1G9 and m1A9, respectively) in tRNAs; TRMT10C/MRPP1 acting as the catalytic N(1)-methyltransferase subunit. The MRPP1-MRPP2 subcomplex also acts as a tRNA maturation platform: following 5'-end cleavage by the mitochondrial ribonuclease P complex, the MRPP1-MRPP2 subcomplex enhances the efficiency of 3'-processing catalyzed by ELAC2, retains the tRNA product after ELAC2 processing and presents the nascent tRNA to the mitochondrial CCA tRNA nucleotidyltransferase TRNT1 enzyme. In addition to tRNA N(1)-methyltransferase activity, TRMT10C/MRPP1 also acts as a mRNA N(1)-methyltransferase by mediating methylation of adenosine residues at the N(1) position of MT-ND5 mRNA. Associates with mitochondrial DNA complexes at the nucleoids to initiate RNA processing and ribosome assembly. The protein is tRNA methyltransferase 10 homolog C of Mus musculus (Mouse).